The following is a 205-amino-acid chain: Small ribosomal subunit protein uS4 (205 aa).

The disordered stretch occupies residues 18–46 (NIWGRPKSPVNRREYGPGQHGQRRKGKLS). Residues 94–157 (RRLDTVVYRS…KQLAIVLEAN (64 aa)) form the S4 RNA-binding domain.

It belongs to the universal ribosomal protein uS4 family. As to quaternary structure, part of the 30S ribosomal subunit. Contacts protein S5. The interaction surface between S4 and S5 is involved in control of translational fidelity.

In terms of biological role, one of the primary rRNA binding proteins, it binds directly to 16S rRNA where it nucleates assembly of the body of the 30S subunit. Its function is as follows. With S5 and S12 plays an important role in translational accuracy. In Rhodopseudomonas palustris (strain BisB5), this protein is Small ribosomal subunit protein uS4.